The chain runs to 415 residues: MSEADGLRQRRPLRPQVVTDDGQVPEVKEGSSFSGRVFRMTFLMLAVSLAIPLLGAMMLLESPIDPQSFSFKEPPFMFGVLHPNTKLRQAERLFENQLSGPESIVNIGDVLFTGTADGRVVKLENGEIETIARFGSGPCKTRDDEPTCGRPLGIRAGPNGTLFVVDAYKGLFEVNPQKRSVKLLLSSETPIEGKKMSFVNDLTVTRDGRKIYFTDSSSKWQRRDYLLLVMEATDDGRLLEYDTVTKEVKVLLDQLQFPNGVQLSPEEDFVLVAETTMARIRRVYVSGLMKGGADMFVENMPGFPDNIRPSSSGGYWVAAATIRANPGFSMLDFLSDKPFIKRMIFKMFSQETVMKFVPRYSLVLEVSDSGAFRRSLHDPDGQVVTYVSEAHEHDGYLYLGSFRSPFICRLSLQSI.

The segment at 1-29 is disordered; the sequence is MSEADGLRQRRPLRPQVVTDDGQVPEVKE. The residue at position 2 (S2) is an N-acetylserine. Topologically, residues 2–39 are cytoplasmic; the sequence is SEADGLRQRRPLRPQVVTDDGQVPEVKEGSSFSGRVFR. At T19 the chain carries Phosphothreonine. A helical; Signal-anchor for type II membrane protein membrane pass occupies residues 40–60; that stretch reads MTFLMLAVSLAIPLLGAMMLL. The Extracellular portion of the chain corresponds to 61-415; it reads ESPIDPQSFS…FICRLSLQSI (355 aa). N-linked (GlcNAc...) asparagine glycosylation occurs at N159.

Belongs to the strictosidine synthase family. Post-translationally, glycosylated in vitro. In terms of tissue distribution, strongly expressed in adipose tissue. Highly expressed in liver, heart, and kidney. Expressed at intermediate level in brain and lung. Weakly expressed in spleen, skeletal muscle and testis.

The protein localises to the membrane. Its function is as follows. Exhibits strong arylesterase activity with beta-naphthyl acetate and phenyl acetate. May play a role in adipocyte differentiation. The polypeptide is Adipocyte plasma membrane-associated protein (Apmap) (Mus musculus (Mouse)).